The chain runs to 43 residues: Protein PsbN 1 (43 aa).

Residues 3–23 form a helical membrane-spanning segment; it reads TATILGILIAAAVVGITVLAL.

This sequence belongs to the PsbN family.

The protein resides in the cellular thylakoid membrane. In terms of biological role, may play a role in photosystem I and II biogenesis. The protein is Protein PsbN 1 of Microcystis aeruginosa (strain NIES-843 / IAM M-2473).